Here is a 76-residue protein sequence, read N- to C-terminus: UPF0291 protein BPUM_1689 (76 aa).

2 disordered regions span residues 1–31 (MISK…TEQK) and 56–76 (DPEG…QNLH). Composition is skewed to basic and acidic residues over residues 12–31 (ELSK…TEQK) and 63–76 (TPEK…QNLH).

The protein belongs to the UPF0291 family.

It is found in the cytoplasm. The protein is UPF0291 protein BPUM_1689 of Bacillus pumilus (strain SAFR-032).